Here is a 251-residue protein sequence, read N- to C-terminus: Phosphosulfolactate synthase (251 aa).

The protein belongs to the phosphosulfolactate synthase family. In terms of assembly, homotrimer. Mg(2+) is required as a cofactor.

It catalyses the reaction (2R)-O-phospho-3-sulfolactate = phosphoenolpyruvate + sulfite + H(+). It participates in cofactor biosynthesis; coenzyme M biosynthesis; sulfoacetaldehyde from phosphoenolpyruvate and sulfite: step 1/4. Functionally, catalyzes the addition of sulfite to phosphoenolpyruvate (PEP) to yield (2R)-phospho-3-sulfolactate (PSL). The polypeptide is Phosphosulfolactate synthase (comA) (Methanocaldococcus jannaschii (strain ATCC 43067 / DSM 2661 / JAL-1 / JCM 10045 / NBRC 100440) (Methanococcus jannaschii)).